The following is a 215-amino-acid chain: Eukaryotic translation initiation factor 4E (215 aa).

Positions 1–27 (MAERDSEPRVNIIRPDDEPEVEEERVP) are disordered. Serine 207 bears the Phosphoserine; by PKC mark.

It belongs to the eukaryotic initiation factor 4E family. In terms of assembly, eIF4F is a multi-subunit complex, the composition of which varies with external and internal environmental conditions. It is composed of at least eIF4A, eIF4E and eIF4G. eIF4E is also known to interact with other partners. Phosphorylation increases the ability of the protein to bind to mRNA caps and to form the eIF4F complex.

In terms of biological role, recognizes and binds the 7-methylguanosine-containing mRNA cap during an early step in the initiation of protein synthesis and facilitates ribosome binding by inducing the unwinding of the mRNAs secondary structures. This Aplysia californica (California sea hare) protein is Eukaryotic translation initiation factor 4E.